The chain runs to 438 residues: CBL-interacting protein kinase 32 (438 aa).

In terms of domain architecture, Protein kinase spans 13–268 (YELGRTIGEG…IPEILEDEWF (256 aa)). Residues 19-27 (IGEGTFAKV) and lysine 42 contribute to the ATP site. The Proton acceptor role is filled by aspartate 136. Positions 154 to 183 (DFGLSALSQQIKDDGLLHTTCGTPNYVAPE) are activation loop. Residues 305–329 (EEPEALNAFELISMSAGLNLGNLFD) form the NAF domain. A PPI region spans residues 335–364 (KRETRFTSKCPPKEIVRKIEEAAKPLGFDV).

The protein belongs to the protein kinase superfamily. CAMK Ser/Thr protein kinase family. SNF1 subfamily. Mn(2+) is required as a cofactor.

The catalysed reaction is L-seryl-[protein] + ATP = O-phospho-L-seryl-[protein] + ADP + H(+). It carries out the reaction L-threonyl-[protein] + ATP = O-phospho-L-threonyl-[protein] + ADP + H(+). CIPK serine-threonine protein kinases interact with CBL proteins. Binding of a CBL protein to the regulatory NAF domain of CIPK protein lead to the activation of the kinase in a calcium-dependent manner. This Oryza sativa subsp. japonica (Rice) protein is CBL-interacting protein kinase 32 (CIPK32).